A 119-amino-acid chain; its full sequence is Large ribosomal subunit protein bL20 (119 aa).

It belongs to the bacterial ribosomal protein bL20 family.

Binds directly to 23S ribosomal RNA and is necessary for the in vitro assembly process of the 50S ribosomal subunit. It is not involved in the protein synthesizing functions of that subunit. This chain is Large ribosomal subunit protein bL20, found in Caldicellulosiruptor bescii (strain ATCC BAA-1888 / DSM 6725 / KCTC 15123 / Z-1320) (Anaerocellum thermophilum).